Consider the following 205-residue polypeptide: 3-demethoxyubiquinol 3-hydroxylase (205 aa).

6 residues coordinate Fe cation: Glu-54, Glu-84, His-87, Glu-136, Glu-168, and His-171.

The protein belongs to the COQ7 family. Requires Fe cation as cofactor.

It is found in the cell membrane. It carries out the reaction a 5-methoxy-2-methyl-3-(all-trans-polyprenyl)benzene-1,4-diol + AH2 + O2 = a 3-demethylubiquinol + A + H2O. The protein operates within cofactor biosynthesis; ubiquinone biosynthesis. Catalyzes the hydroxylation of 2-nonaprenyl-3-methyl-6-methoxy-1,4-benzoquinol during ubiquinone biosynthesis. The sequence is that of 3-demethoxyubiquinol 3-hydroxylase from Acidovorax sp. (strain JS42).